The sequence spans 451 residues: D(1A) dopamine receptor (451 aa).

Over 1–22 the chain is Extracellular; that stretch reads MTFNITSMDEDVLLTERESSFR. N4 is a glycosylation site (N-linked (GlcNAc...) asparagine). Residues 23 to 48 form a helical membrane-spanning segment; it reads VLTGCFLSVLILSTLLGNTLVCAAVI. Over 49–59 the chain is Cytoplasmic; the sequence is RFRHLRSKVTN. A helical transmembrane segment spans residues 60 to 86; it reads FFVISLAVSDLLVAVLVMPWKAVAEIA. At 87–95 the chain is on the extracellular side; that stretch reads GFWPFGTFC. C95 and C185 are joined by a disulfide. A helical transmembrane segment spans residues 96–118; the sequence is NIWVAFDIMCSTASILNLCVISV. Topologically, residues 119–137 are cytoplasmic; sequence DRYWAISSPFRYERKMTPK. Residues 138–162 form a helical membrane-spanning segment; the sequence is VAFIMIGVAWTLSVLISFIPVQLNW. At 163–191 the chain is on the extracellular side; that stretch reads HKAKTTSFFDLNITLHDRTMDNCDSSLNR. Residues 192 to 217 form a helical membrane-spanning segment; the sequence is TYAISSSLISFYIPVAIMIVTYTRIY. Residues 218-271 lie on the Cytoplasmic side of the membrane; it reads RIAAKQIRRISALERAAVHAKNCQNSTSNRNSLDCQQPESSLKTSFKRETKVLK. The chain crosses the membrane as a helical span at residues 272-298; that stretch reads TLSVIMGVFVCCWLPFFILNCIVPFCD. Topologically, residues 299–315 are extracellular; that stretch reads PSLTTSGTEPFCISSTT. Residues 316 to 340 form a helical membrane-spanning segment; it reads FDVFVWFGWANSSLNPIIYAFNADF. Residues 341 to 451 lie on the Cytoplasmic side of the membrane; that stretch reads RKAFSNLLGC…PITQNGQPKT (111 aa). Residue C350 is the site of S-palmitoyl cysteine attachment.

Belongs to the G-protein coupled receptor 1 family. In terms of tissue distribution, brain.

The protein resides in the cell membrane. The protein localises to the cell projection. It is found in the cilium membrane. Functionally, dopamine receptor whose activity is mediated by G proteins which activate adenylyl cyclase. In Xenopus laevis (African clawed frog), this protein is D(1A) dopamine receptor (drd1).